A 409-amino-acid chain; its full sequence is Arginine deiminase (409 aa).

Cysteine 399 functions as the Amidino-cysteine intermediate in the catalytic mechanism.

Belongs to the arginine deiminase family.

It localises to the cytoplasm. The enzyme catalyses L-arginine + H2O = L-citrulline + NH4(+). It participates in amino-acid degradation; L-arginine degradation via ADI pathway; carbamoyl phosphate from L-arginine: step 1/2. This chain is Arginine deiminase, found in Borrelia duttonii (strain Ly).